Consider the following 409-residue polypeptide: Peptidase T (409 aa).

Zn(2+) is bound at residue His78. The active site involves Asp80. Asp140 contributes to the Zn(2+) binding site. Catalysis depends on Glu173, which acts as the Proton acceptor. Zn(2+) contacts are provided by Glu174, Asp196, and His379.

Belongs to the peptidase M20B family. Zn(2+) serves as cofactor.

It is found in the cytoplasm. The enzyme catalyses Release of the N-terminal residue from a tripeptide.. Cleaves the N-terminal amino acid of tripeptides. The chain is Peptidase T from Salmonella paratyphi C (strain RKS4594).